Here is a 98-residue protein sequence, read N- to C-terminus: Small ribosomal subunit protein bTHXm (98 aa).

The transit peptide at 1 to 35 (MAAMQWCGAMTRRIMMTQRTSAALNCSARYSSLSP) directs the protein to the mitochondrion. The segment at 52–71 (DKKTKKGKRFKGSYGNSRGK) is disordered. Over residues 53–62 (KKTKKGKRFK) the composition is skewed to basic residues.

The protein belongs to the bacterial ribosomal protein bTHX family. Component of the mitochondrial ribosome small subunit.

The protein localises to the mitochondrion. The chain is Small ribosomal subunit protein bTHXm from Arabidopsis thaliana (Mouse-ear cress).